Consider the following 109-residue polypeptide: Flagellar hook-basal body complex protein FliE (109 aa).

The protein belongs to the FliE family.

The protein resides in the bacterial flagellum basal body. This chain is Flagellar hook-basal body complex protein FliE, found in Pseudomonas aeruginosa (strain LESB58).